The sequence spans 634 residues: Probable potassium transport system protein Kup (634 aa).

A run of 12 helical transmembrane segments spans residues 19 to 39 (AVGL…TSPL), 62 to 82 (VLSL…VIFV), 113 to 133 (FVVV…MITP), 150 to 170 (GLEH…FLIQ), 177 to 197 (IGIL…ALGV), 225 to 245 (IGVA…ALYA), 259 to 279 (WFLL…ATIL), 291 to 311 (LLAP…ATVI), 349 to 369 (IYIG…VLGF), 379 to 399 (YGVA…VVIW), 406 to 426 (LWLG…FFAA), and 431 to 451 (VVQG…LMST).

Belongs to the HAK/KUP transporter (TC 2.A.72) family.

The protein localises to the cell inner membrane. The enzyme catalyses K(+)(in) + H(+)(in) = K(+)(out) + H(+)(out). Functionally, transport of potassium into the cell. Likely operates as a K(+):H(+) symporter. This chain is Probable potassium transport system protein Kup, found in Pseudomonas paraeruginosa (strain DSM 24068 / PA7) (Pseudomonas aeruginosa (strain PA7)).